Consider the following 551-residue polypeptide: MAKAFVFSLCLLLVFNGCLAARQSQLSPQNQCQLNQLQAREPDNRIQAEAGQIETWNFNQGDFQCAGVAASRITIQRNGLHLPSYSNAPQLIYIVQGRGVLGAVFSGCPETFEESQQSSQQGRQQEQEQERQQQQQGEQGRQQGQQEQQQERQGRQQGRQQQEEGRQQEQQQGQQGRPQQQQQFRQLDRHQKTRRIREGDVVAIPAGVAYWSYNDGDQELVAVNLFHVSSDHNQLDQNPRKFYLAGNPENEFNQQGQSQPRQQGEQGRPGQHQQPFGRPRQQEQQGNGNNVFSGFNTQLLAQALNVNEETARNLQGQNDNRNQIIQVRGNLDFVQPPRGRQEREHEERQQEQLQQERQQQGEQLMANGLEETFCSLRLKENIGNPERADIFSPRAGRISTLNSHNLPILRFLRLSAERGFFYRNGIYSPHWNVNAHSVVYVIRGNARVQVVNENGDAILDQEVQQGQLFIVPQNHGVIQQAGNQGFEYFAFKTEENAFINTLAGRTSFLRALPDEVLANAYQISREQARQLKYNRQETIALSSSQQRRAVV.

A signal peptide spans 1–20 (MAKAFVFSLCLLLVFNGCLA). 2 disulfide bridges follow: Cys-32-Cys-65 and Cys-108-Cys-374. Residues 37–312 (LQAREPDNRI…ALNVNEETAR (276 aa)) form the Cupin type-1 1 domain. 3 disordered regions span residues 111–194 (TFEE…QKTR), 238–293 (NPRK…NVFS), and 329–360 (GNLDFVQPPRGRQEREHEERQQEQLQQERQQQ). Composition is skewed to low complexity over residues 114–124 (ESQQSSQQGRQ), 132–148 (QQQQQGEQGRQQGQQEQ), and 168–185 (QEQQQGQQGRPQQQQQFR). Arg-194 serves as a coordination point for Ca(2+). Residues 254 to 275 (QQGQSQPRQQGEQGRPGQHQQP) show a composition bias toward low complexity. Polar residues predominate over residues 282-293 (QEQQGNGNNVFS). Over residues 339–350 (GRQEREHEERQQ) the composition is skewed to basic and acidic residues. Residues 351-360 (EQLQQERQQQ) are compositionally biased toward low complexity. The NGXEET; peptidase recognition motif signature appears at 367–372 (NGLEET). In terms of domain architecture, Cupin type-1 2 spans 380-529 (ENIGNPERAD…AYQISREQAR (150 aa)).

The protein belongs to the 11S seed storage protein (globulins) family. Hexamer of two trimers; each subunit is composed of an acidic and a basic chain derived from a single precursor and linked by a disulfide bond. In terms of processing, proteolytically processed from a single precursor to produce an acidic and a basic chain that are linked by a disulfide bond. In terms of tissue distribution, expressed in seed (at protein level). Expressed in seed.

Seed storage protein. The protein is Prunin 1 Pru du 6 of Prunus dulcis (Almond).